We begin with the raw amino-acid sequence, 216 residues long: Pyrophosphatase PpaX (216 aa).

The active-site Nucleophile is the Asp-9.

The protein belongs to the HAD-like hydrolase superfamily. PpaX family. The cofactor is Mg(2+).

It carries out the reaction diphosphate + H2O = 2 phosphate + H(+). In terms of biological role, hydrolyzes pyrophosphate formed during P-Ser-HPr dephosphorylation by HPrK/P. Might play a role in controlling the intracellular pyrophosphate pool. In Bacillus cereus (strain AH820), this protein is Pyrophosphatase PpaX.